We begin with the raw amino-acid sequence, 359 residues long: Photosystem II protein D1 1 (359 aa).

3 consecutive transmembrane segments (helical) span residues 29 to 46, 118 to 133, and 142 to 156; these read YVGW…AATI, HFLI…EWEL, and WICV…AASA. Residue His-118 participates in chlorophyll a binding. Position 126 (Tyr-126) interacts with pheophytin a. Residues Asp-170 and Glu-189 each coordinate [CaMn4O5] cluster. Residues 197–218 traverse the membrane as a helical segment; sequence FHMLGVAGVFGGSLFSAMHGSL. His-198 provides a ligand contact to chlorophyll a. A quinone contacts are provided by residues His-215 and 264-265; that span reads SF. Residue His-215 coordinates Fe cation. His-272 contacts Fe cation. A helical transmembrane segment spans residues 274–288; sequence FLAAWPVVGIWFTAL. Residues His-332, Glu-333, Asp-342, and Ala-344 each coordinate [CaMn4O5] cluster. Positions 345-359 are excised as a propeptide; it reads AAESTPVALQAPAIG.

It belongs to the reaction center PufL/M/PsbA/D family. In terms of assembly, PSII is composed of 1 copy each of membrane proteins PsbA, PsbB, PsbC, PsbD, PsbE, PsbF, PsbH, PsbI, PsbJ, PsbK, PsbL, PsbM, PsbT, PsbX, PsbY, PsbZ, Psb30/Ycf12, peripheral proteins PsbO, CyanoQ (PsbQ), PsbU, PsbV and a large number of cofactors. It forms dimeric complexes. The D1/D2 heterodimer binds P680, chlorophylls that are the primary electron donor of PSII, and subsequent electron acceptors. It shares a non-heme iron and each subunit binds pheophytin, quinone, additional chlorophylls, carotenoids and lipids. D1 provides most of the ligands for the Mn4-Ca-O5 cluster of the oxygen-evolving complex (OEC). There is also a Cl(-1) ion associated with D1 and D2, which is required for oxygen evolution. The PSII complex binds additional chlorophylls, carotenoids and specific lipids. is required as a cofactor. Post-translationally, tyr-161 forms a radical intermediate that is referred to as redox-active TyrZ, YZ or Y-Z. In terms of processing, C-terminally processed by CtpA; processing is essential to allow assembly of the oxygen-evolving complex and thus photosynthetic growth.

It localises to the cellular thylakoid membrane. It carries out the reaction 2 a plastoquinone + 4 hnu + 2 H2O = 2 a plastoquinol + O2. In terms of biological role, photosystem II (PSII) is a light-driven water:plastoquinone oxidoreductase that uses light energy to abstract electrons from H(2)O, generating O(2) and a proton gradient subsequently used for ATP formation. It consists of a core antenna complex that captures photons, and an electron transfer chain that converts photonic excitation into a charge separation. The D1/D2 (PsbA/PsbD) reaction center heterodimer binds P680, the primary electron donor of PSII as well as several subsequent electron acceptors. This Synechococcus sp. (strain CC9605) protein is Photosystem II protein D1 1.